Here is a 378-residue protein sequence, read N- to C-terminus: MTVPQERIEIRNIDPGTNPTRFARGWHCIGLAKDFRDGKPHQVKVFGTDLVVFADTAGKLHVLDAFCRHMGGNLARGEIKGDTIACPFHDWRWNGQGRCEAVPYARRTPKLGRTKAWTTMERNGVLFVWHCPQGSEPTPELAIPEIEGYEDGQWSDWTWTTIHVEGSHCREIVDNVVDMAHFFYVHFQMPEYFKNVFDGHIAGQHMRSYGRDDIKTGVQMDLPEAQTISDAFYYGPSFMLDTIYTVSEGTTIESKLINCHYPVTNNSFVLQFGTIVKKIEGMSEEQAAEMATMFTDGLEEQFAQDIEIWKHKSRIENPLLTEEDGPVYQLRRWYNQFYVDLEDVTPDMTQRFEFEVDTSRALESWHKEVEENLAGTAE.

Positions 26–128 constitute a Rieske domain; it reads WHCIGLAKDF…TMERNGVLFV (103 aa). Residues C67, H69, C86, and H89 each contribute to the [2Fe-2S] cluster site. Fe cation is bound by residues N175, H181, H186, and D305.

As to quaternary structure, homotrimer. The two-component system 3-ketosteroid-9-alpha-monooxygenase is composed of an oxygenase component KshA and a reductase component KshB. [2Fe-2S] cluster serves as cofactor. The cofactor is Fe cation.

The catalysed reaction is androsta-1,4-diene-3,17-dione + 2 reduced [2Fe-2S]-[ferredoxin] + O2 + 2 H(+) = 9alpha-hydroxyandrosta-1,4-diene-3,17-dione + 2 oxidized [2Fe-2S]-[ferredoxin] + H2O. With respect to regulation, KSH activity is completely inhibited by zinc ions. KshA is specifically inhibited by Fe(3+), Co(2+), Zn(2+) and Ni(2+) ions. Its function is as follows. In vitro, catalyzes the introduction of a 9alpha-hydroxyl moiety into the ring B of 3-ketosteroid substrates such as 1,4-androstadiene-3,17-dione (ADD), 4-androstene-3,17-dione (AD), 4-androstene-17beta-ol-3-one (testosterone), 4-pregnene-3,20-dione (progesterone), 19-nor-4-androstene-3,17-dione (nordion), 1-(5alpha)-androstene-3,17-dione, 5alpha-androstane-3,17-dione and 5beta-androstane-3,17-dione. KSH has the highest activity with 3-keto-delta4 steroid substrates. In Rhodococcus rhodochrous, this protein is 3-ketosteroid-9-alpha-monooxygenase, oxygenase component.